The following is a 280-amino-acid chain: MFELKNVTRRFGKKLAVDSVTLAIAQGQMVGIIGRSGAGKSTLLRMINRLQEPSSGSVHFAGVEVSGLRGQALRNWQRDCAMIFQQFNLVPRLDVLTNVMLGRLNHRSTLMSLLNIFTREERVHAIAALERLGIEQTALQAAGTLSGGQQQRVAIARALMQNPKMVLADEPIASLDPLNAKIVMDALRDINEREGITVITNLHTLDTARNYCERIVGMAGGRVVFDGKPSELTAEAVKEIYGTDKDGAGIDETMTSTSLESKRRAEDVSSGRVAKAAAVH.

One can recognise an ABC transporter domain in the interval 2–245; that stretch reads FELKNVTRRF…AVKEIYGTDK (244 aa). 34-41 is a binding site for ATP; it reads GRSGAGKS. Residues 257 to 280 are disordered; sequence TSLESKRRAEDVSSGRVAKAAAVH. Residues 260-269 are compositionally biased toward basic and acidic residues; it reads ESKRRAEDVS.

This sequence belongs to the ABC transporter superfamily. Phosphonates importer (TC 3.A.1.9.1) family. As to quaternary structure, the complex is composed of two ATP-binding proteins (PhnC), two transmembrane proteins (PhnE) and a solute-binding protein (PhnD).

The protein resides in the cell inner membrane. It catalyses the reaction phosphonate(out) + ATP + H2O = phosphonate(in) + ADP + phosphate + H(+). In terms of biological role, part of the ABC transporter complex PhnCDE involved in phosphonates import. Responsible for energy coupling to the transport system. This Rhizobium johnstonii (strain DSM 114642 / LMG 32736 / 3841) (Rhizobium leguminosarum bv. viciae) protein is Phosphonates import ATP-binding protein PhnC.